A 749-amino-acid polypeptide reads, in one-letter code: 5-methyltetrahydropteroyltriglutamate--homocysteine methyltransferase (749 aa).

Residues 15 to 18 (RELK) and lysine 114 each bind 5-methyltetrahydropteroyltri-L-glutamate. Residues 425–427 (IGS) and glutamate 478 contribute to the L-homocysteine site. L-methionine-binding positions include 425–427 (IGS) and glutamate 478. Tryptophan 555 lines the 5-methyltetrahydropteroyltri-L-glutamate pocket. Residue aspartate 593 coordinates L-homocysteine. An L-methionine-binding site is contributed by aspartate 593. Glutamate 599 serves as a coordination point for 5-methyltetrahydropteroyltri-L-glutamate. Zn(2+) is bound by residues histidine 636, cysteine 638, and glutamate 660. Histidine 689 functions as the Proton donor in the catalytic mechanism. Cysteine 721 contacts Zn(2+).

This sequence belongs to the vitamin-B12 independent methionine synthase family. Requires Zn(2+) as cofactor.

It carries out the reaction 5-methyltetrahydropteroyltri-L-glutamate + L-homocysteine = tetrahydropteroyltri-L-glutamate + L-methionine. Its pathway is amino-acid biosynthesis; L-methionine biosynthesis via de novo pathway; L-methionine from L-homocysteine (MetE route): step 1/1. In terms of biological role, catalyzes the transfer of a methyl group from 5-methyltetrahydrofolate to homocysteine resulting in methionine formation. This Streptococcus pneumoniae serotype 2 (strain D39 / NCTC 7466) protein is 5-methyltetrahydropteroyltriglutamate--homocysteine methyltransferase.